The chain runs to 231 residues: MSVTLALPSKGRLKEKTLAVLEKAGYKVVLPDDDRNYRARVEGEDDLDILFLSASEIARELGYGSVDLGVTGEDLVRETLAHADERVAIEAQLGFGHADVVVAVPEVWRDVTTMADLDDVAADFRQRHGRRLRIATKYWRLTQQFFSQKHGIQVYRIVESLGATEGAPAAGSADMIVDITSTGSTLRANRLKVLEDGIIRRSQACLVSARRSHTSRRVEEIAARIRAGLEI.

Belongs to the ATP phosphoribosyltransferase family. Short subfamily. In terms of assembly, heteromultimer composed of HisG and HisZ subunits.

It localises to the cytoplasm. The enzyme catalyses 1-(5-phospho-beta-D-ribosyl)-ATP + diphosphate = 5-phospho-alpha-D-ribose 1-diphosphate + ATP. It functions in the pathway amino-acid biosynthesis; L-histidine biosynthesis; L-histidine from 5-phospho-alpha-D-ribose 1-diphosphate: step 1/9. Catalyzes the condensation of ATP and 5-phosphoribose 1-diphosphate to form N'-(5'-phosphoribosyl)-ATP (PR-ATP). Has a crucial role in the pathway because the rate of histidine biosynthesis seems to be controlled primarily by regulation of HisG enzymatic activity. This Brucella ovis (strain ATCC 25840 / 63/290 / NCTC 10512) protein is ATP phosphoribosyltransferase.